The chain runs to 5209 residues: E3 ubiquitin-protein ligase rnf213-alpha (5209 aa).

Polar residues-rich tracts occupy residues 27 to 52 (SQSY…QITN) and 61 to 72 (ESKSLEIQNANV). Residues 27–373 (SQSYETTQGT…KRNTRSTQHI (347 aa)) form a disordered region. A compositionally biased stretch (basic residues) spans 85–101 (PKKKKRKKRKKEKKKKS). The segment covering 108–118 (SSLTSDLSDIS) has biased composition (low complexity). The span at 119 to 128 (LTDKEKKMDT) shows a compositional bias: basic and acidic residues. Polar residues-rich tracts occupy residues 167-177 (LSASALTTGSS) and 184-195 (IGTTQKPVSASA). Residues 205 to 218 (QTKEEKVKCKDEGQ) show a composition bias toward basic and acidic residues. Over residues 219–243 (KSLSAKAQHTPNANVDQNANVQSDA) the composition is skewed to polar residues. Residues 256–269 (KSSSVKTKPSKSTV) are compositionally biased toward low complexity. Composition is skewed to basic and acidic residues over residues 271 to 288 (DPKK…RDNE) and 330 to 352 (MKVE…SKES). Residues 2036–2041 (GVGKSL), Glu-2135, Asp-2193, Arg-2252, Lys-2535, and Ser-2610 contribute to the ATP site. The Zn(2+) site is built by Cys-4005, Cys-4008, Cys-4020, His-4022, Cys-4025, Cys-4028, Cys-4040, Cys-4043, Cys-4507, and His-4511. The RING-type zinc finger occupies 4005 to 4043 (CPVCMGDPRDPLSLPCDHIYCLTCIRQWLVPGQMHCPLC). Residues 4487-4557 (MPDDMLAVAQ…MQIQADRTQS (71 aa)) form an RZ-type zinc finger. The Nucleophile; for E3 ubiquitin-lipopolysaccharide ligase activity role is filled by Cys-4518. The Zn(2+) site is built by Cys-4527 and Cys-4530.

This sequence belongs to the AAA ATPase family.

It is found in the cytoplasm. It localises to the cytosol. The protein resides in the lipid droplet. It carries out the reaction S-ubiquitinyl-[E2 ubiquitin-conjugating enzyme]-L-cysteine + [acceptor protein]-L-lysine = [E2 ubiquitin-conjugating enzyme]-L-cysteine + N(6)-ubiquitinyl-[acceptor protein]-L-lysine.. The catalysed reaction is ATP + H2O = ADP + phosphate + H(+). It functions in the pathway protein modification; protein ubiquitination. Functionally, atypical E3 ubiquitin ligase that can catalyze ubiquitination of both proteins and lipids, and which is involved in various processes, such as lipid metabolism, angiogenesis and cell-autonomous immunity. Acts as a key immune sensor by catalyzing ubiquitination of the lipid A moiety of bacterial lipopolysaccharide (LPS) via its RZ-type zinc-finger: restricts the proliferation of cytosolic bacteria, such as Salmonella, by generating the bacterial ubiquitin coat through the ubiquitination of LPS. Ubiquitination of LPS triggers cell-autonomous immunity, such as antibacterial autophagy, leading to degradation of the microbial invader. Involved in lipid metabolism by regulating fat storage and lipid droplet formation; act by inhibiting the lipolytic process. Also regulates lipotoxicity by inhibiting desaturation of fatty acids. Also acts as an E3 ubiquitin-protein ligase via its RING-type zinc finger. Involved in the non-canonical Wnt signaling pathway in vascular development: acts by mediating ubiquitination and degradation of proteins downstream of rspo3, leading to inhibit the non-canonical Wnt signaling pathway and promoting vessel regression. Also has ATPase activity; ATPase activity is required for ubiquitination of LPS. Also involved in neuromuscular regulation. This Danio rerio (Zebrafish) protein is E3 ubiquitin-protein ligase rnf213-alpha.